The sequence spans 408 residues: DNA polymerase processivity factor (408 aa).

Positions 344–353 (KKRRNLLTKR) match the Nuclear localization signal motif.

It belongs to the herpesviridae DNA polymerase processivity factor family. As to quaternary structure, interacts with the DNA polymerase catalytic subunit. Interacts with the origin-binding protein.

Its subcellular location is the host nucleus. Plays an essential role in viral DNA replication by acting as the polymerase accessory subunit. Associates with the viral polymerase to increase its processivity and forms high-affinity direct interactions with DNA. Facilitates the origin-binding protein loading onto DNA thus increasing its ability to assemble into a functional complex capable of unwinding duplex DNA. The protein is DNA polymerase processivity factor of Varicella-zoster virus (strain Dumas) (HHV-3).